Consider the following 204-residue polypeptide: Glycerol-3-phosphate acyltransferase (204 aa).

Helical transmembrane passes span 6–26, 80–100, 122–142, 144–164, and 168–188; these read YIIIAVVAYLLGNISTSYIVA, LVGIDTLLAGYLAVICVVAGH, LAVNPVITLMCLAVFILVVAI, KYVSLGSVVGIGCSPIFMIMV, and AGLIVALFLTASVIYNHRANI.

The protein belongs to the PlsY family. As to quaternary structure, probably interacts with PlsX.

It is found in the cell membrane. It carries out the reaction an acyl phosphate + sn-glycerol 3-phosphate = a 1-acyl-sn-glycero-3-phosphate + phosphate. It functions in the pathway lipid metabolism; phospholipid metabolism. Catalyzes the transfer of an acyl group from acyl-phosphate (acyl-PO(4)) to glycerol-3-phosphate (G3P) to form lysophosphatidic acid (LPA). This enzyme utilizes acyl-phosphate as fatty acyl donor, but not acyl-CoA or acyl-ACP. This Clostridioides difficile (strain 630) (Peptoclostridium difficile) protein is Glycerol-3-phosphate acyltransferase.